The primary structure comprises 520 residues: Nonsense-mediated mRNA decay factor SMG9 (520 aa).

2 disordered regions span residues 1–94 (MSES…PAPL) and 107–143 (GKGPVAATGASTPEGTAPPPPTAPAPPKGEKEGQRPT). S2 carries the post-translational modification N-acetylserine. Phosphoserine is present on residues S2, S4, S7, S32, and S53. Basic and acidic residues predominate over residues 36–53 (GRERDYIAPWERERRDGS). Positions 78-94 (QPPPSTAPAAPPAPAPL) are enriched in pro residues. Over residues 112–121 (AATGASTPEG) the composition is skewed to low complexity. A compositionally biased stretch (pro residues) spans 122–133 (TAPPPPTAPAPP). At S451 the chain carries Phosphoserine.

The protein belongs to the SMG9 family. In terms of assembly, self-associates to form homodimers and forms heterodimers with SMG8; these assembly forms may represent SMG1C intermediate forms. Component of the SMG1C complex composed of SMG1, SMG8 and SMG9. Interacts with DHX34; the interaction is RNA-independent. Phosphorylated by SMG1.

Involved in nonsense-mediated decay (NMD) of mRNAs containing premature stop codons. Is recruited by release factors to stalled ribosomes together with SMG1 and SMG8 (forming the SMG1C protein kinase complex) and, in the SMG1C complex, is required for the efficient association between SMG1 and SMG8. Plays a role in brain, heart, and eye development. This chain is Nonsense-mediated mRNA decay factor SMG9, found in Rattus norvegicus (Rat).